Consider the following 159-residue polypeptide: Ribosomal RNA large subunit methyltransferase H (159 aa).

S-adenosyl-L-methionine-binding positions include leucine 76, glycine 108, and 127 to 132 (FGRLTL).

It belongs to the RNA methyltransferase RlmH family. Homodimer.

The protein resides in the cytoplasm. The enzyme catalyses pseudouridine(1915) in 23S rRNA + S-adenosyl-L-methionine = N(3)-methylpseudouridine(1915) in 23S rRNA + S-adenosyl-L-homocysteine + H(+). Functionally, specifically methylates the pseudouridine at position 1915 (m3Psi1915) in 23S rRNA. The sequence is that of Ribosomal RNA large subunit methyltransferase H from Streptococcus uberis (strain ATCC BAA-854 / 0140J).